We begin with the raw amino-acid sequence, 380 residues long: Cytochrome b (380 aa).

Transmembrane regions (helical) follow at residues 34–54, 78–99, 114–134, and 179–199; these read FGSL…LLAT, WLIR…YLHI, WNTG…GYVL, and FFAL…THLT. Positions 84 and 98 each coordinate heme b. Positions 183 and 197 each coordinate heme b. His202 provides a ligand contact to a ubiquinone. 4 helical membrane-spanning segments follow: residues 227-247, 289-309, 321-341, and 348-368; these read PKDL…ALFS, LGGV…PFLH, LSQL…WVGS, and FIII…ILFP.

The protein belongs to the cytochrome b family. In terms of assembly, the cytochrome bc1 complex contains 11 subunits: 3 respiratory subunits (MT-CYB, CYC1 and UQCRFS1), 2 core proteins (UQCRC1 and UQCRC2) and 6 low-molecular weight proteins (UQCRH/QCR6, UQCRB/QCR7, UQCRQ/QCR8, UQCR10/QCR9, UQCR11/QCR10 and a cleavage product of UQCRFS1). This cytochrome bc1 complex then forms a dimer. Requires heme b as cofactor.

The protein localises to the mitochondrion inner membrane. Component of the ubiquinol-cytochrome c reductase complex (complex III or cytochrome b-c1 complex) that is part of the mitochondrial respiratory chain. The b-c1 complex mediates electron transfer from ubiquinol to cytochrome c. Contributes to the generation of a proton gradient across the mitochondrial membrane that is then used for ATP synthesis. This chain is Cytochrome b (MT-CYB), found in Todus todus (Jamaican tody).